The chain runs to 259 residues: Thiazole synthase (259 aa).

Lys100 serves as the catalytic Schiff-base intermediate with DXP. 1-deoxy-D-xylulose 5-phosphate contacts are provided by residues Gly161, 187 to 188 (AG), and 209 to 210 (AS).

The protein belongs to the ThiG family. In terms of assembly, homotetramer. Forms heterodimers with either ThiH or ThiS.

It localises to the cytoplasm. It carries out the reaction [ThiS sulfur-carrier protein]-C-terminal-Gly-aminoethanethioate + 2-iminoacetate + 1-deoxy-D-xylulose 5-phosphate = [ThiS sulfur-carrier protein]-C-terminal Gly-Gly + 2-[(2R,5Z)-2-carboxy-4-methylthiazol-5(2H)-ylidene]ethyl phosphate + 2 H2O + H(+). It functions in the pathway cofactor biosynthesis; thiamine diphosphate biosynthesis. Functionally, catalyzes the rearrangement of 1-deoxy-D-xylulose 5-phosphate (DXP) to produce the thiazole phosphate moiety of thiamine. Sulfur is provided by the thiocarboxylate moiety of the carrier protein ThiS. In vitro, sulfur can be provided by H(2)S. This is Thiazole synthase from Salinispora arenicola (strain CNS-205).